The chain runs to 500 residues: L-arabinose isomerase (500 aa).

Positions 306, 333, 350, and 450 each coordinate Mn(2+).

Belongs to the arabinose isomerase family. Homohexamer. Mn(2+) is required as a cofactor.

The enzyme catalyses beta-L-arabinopyranose = L-ribulose. The protein operates within carbohydrate degradation; L-arabinose degradation via L-ribulose; D-xylulose 5-phosphate from L-arabinose (bacterial route): step 1/3. In terms of biological role, catalyzes the conversion of L-arabinose to L-ribulose. In Escherichia coli O7:K1 (strain IAI39 / ExPEC), this protein is L-arabinose isomerase.